Here is a 102-residue protein sequence, read N- to C-terminus: Iron-sulfur cluster assembly protein CyaY (102 aa).

Belongs to the frataxin family.

Functionally, involved in iron-sulfur (Fe-S) cluster assembly. May act as a regulator of Fe-S biogenesis. This Mannheimia succiniciproducens (strain KCTC 0769BP / MBEL55E) protein is Iron-sulfur cluster assembly protein CyaY.